Here is a 515-residue protein sequence, read N- to C-terminus: GMP synthase [glutamine-hydrolyzing] (515 aa).

The 191-residue stretch at 10 to 200 (TIIVLDFGSQ…VFGVCGCSEG (191 aa)) folds into the Glutamine amidotransferase type-1 domain. Cys87 functions as the Nucleophile in the catalytic mechanism. Active-site residues include His174 and Glu176. The GMPS ATP-PPase domain occupies 201-390 (WNMENFIEVE…LGIPDEIVWR (190 aa)). An ATP-binding site is contributed by 228-234 (SGGVDSS).

Homodimer.

The enzyme catalyses XMP + L-glutamine + ATP + H2O = GMP + L-glutamate + AMP + diphosphate + 2 H(+). It participates in purine metabolism; GMP biosynthesis; GMP from XMP (L-Gln route): step 1/1. Its function is as follows. Catalyzes the synthesis of GMP from XMP. The protein is GMP synthase [glutamine-hydrolyzing] of Bacillus anthracis (strain A0248).